A 552-amino-acid polypeptide reads, in one-letter code: Gamma-aminobutyric acid receptor subunit alpha-4 (552 aa).

Positions Met1–Gly35 are cleaved as a signal peptide. The Extracellular portion of the chain corresponds to Gln36–Phe259. An N-linked (GlcNAc...) asparagine glycan is attached at Asn47. Residue Arg100 coordinates 4-aminobutanoate. Residues Asn144 and Asn157 are each glycosylated (N-linked (GlcNAc...) asparagine). Thr163 lines the 4-aminobutanoate pocket. A disulfide bond links Cys172 and Cys186. Residues Met260–Ile280 form a helical membrane-spanning segment. Residues Asn281–Ser284 lie on the Cytoplasmic side of the membrane. Residues Val285–Ser305 form a helical membrane-spanning segment. The Extracellular portion of the chain corresponds to Ala306 to Ala318. Residues Met319–Asn341 form a helical membrane-spanning segment. Residues Tyr342–Lys515 are Cytoplasmic-facing. Disordered regions lie at residues Lys353–Arg480 and Gly492–Thr513. Over residues Ser396 to Val406 the composition is skewed to basic and acidic residues. Polar residues predominate over residues Gly407 to Ala422. Positions Ser445–Ser458 are enriched in low complexity. A compositionally biased stretch (pro residues) spans Thr500–Ser509. Residues Ile516–Val538 traverse the membrane as a helical segment. Topologically, residues Tyr539–Met552 are extracellular.

This sequence belongs to the ligand-gated ion channel (TC 1.A.9) family. Gamma-aminobutyric acid receptor (TC 1.A.9.5) subfamily. GABRA4 sub-subfamily. Heteropentamer, formed by a combination of alpha (GABRA1-6), beta (GABRB1-3), gamma (GABRG1-3), delta (GABRD), epsilon (GABRE), rho (GABRR1-3), pi (GABRP) and theta (GABRQ) chains, each subunit exhibiting distinct physiological and pharmacological properties. In terms of tissue distribution, expressed in the brain.

The protein resides in the cell membrane. It is found in the postsynaptic cell membrane. The enzyme catalyses chloride(in) = chloride(out). With respect to regulation, potentiated by gaboxadol. Potentiated by histamine. In terms of biological role, alpha subunit of the heteropentameric ligand-gated chloride channel gated by gamma-aminobutyric acid (GABA), a major inhibitory neurotransmitter in the brain. GABA-gated chloride channels, also named GABA(A) receptors (GABAAR), consist of five subunits arranged around a central pore and contain GABA active binding site(s) located at the alpha and beta subunit interface(s). Alpha-4/GABRA4 subunit often assembles with delta or gamma-2 subunits, in combination with beta subunits. When activated by GABA, GABAARs selectively allow the flow of chloride anions across the cell membrane down their electrochemical gradient. GABAARs containing alpha-4 are predominantly extrasynaptic, contributing to tonic inhibition in dentate granule cells and thalamic relay neurons. Extrasynaptic alpha-4-containing GABAARs control levels of excitability and network activity. GABAAR containing alpha-4-beta-3-delta subunits can simultaneously bind GABA and histamine where histamine binds at the interface of two neighboring beta subunits, which may be involved in the regulation of sleep and wakefulness. This is Gamma-aminobutyric acid receptor subunit alpha-4 from Mus musculus (Mouse).